Reading from the N-terminus, the 467-residue chain is UTP--glucose-1-phosphate uridylyltransferase (467 aa).

Residues 83 to 86, K97, Q160, and G189 contribute to the UTP site; that span reads LNGG. 85-86 is a substrate binding site; it reads GG. Substrate is bound by residues H190 and 218 to 220; that span reads NSD. The UTP site is built by D220 and K358.

Belongs to the UDPGP type 1 family.

It is found in the cytoplasm. It carries out the reaction alpha-D-glucose 1-phosphate + UTP + H(+) = UDP-alpha-D-glucose + diphosphate. In terms of biological role, plays a central role as a glucosyl donor in cellular metabolic pathways. The polypeptide is UTP--glucose-1-phosphate uridylyltransferase (UGPA) (Musa acuminata (Banana)).